We begin with the raw amino-acid sequence, 264 residues long: Phycocyanobilin:ferredoxin oxidoreductase (264 aa).

Belongs to the HY2 family.

The enzyme catalyses (2R,3Z)-phycocyanobilin + 4 oxidized [2Fe-2S]-[ferredoxin] = biliverdin IXalpha + 4 reduced [2Fe-2S]-[ferredoxin] + 4 H(+). In terms of biological role, catalyzes the four-electron reduction of biliverdin IX-alpha (2-electron reduction at both the A and D rings); the reaction proceeds via an isolatable 2-electron intermediate, 181,182-dihydrobiliverdin. The polypeptide is Phycocyanobilin:ferredoxin oxidoreductase (pcyA) (Prochlorococcus marinus (strain MIT 9313)).